We begin with the raw amino-acid sequence, 546 residues long: (-)-5-epieremophilene synthase STPS1 (546 aa).

Positions 299, 303, 442, 446, and 450 each coordinate Mg(2+). The DDXXD motif motif lies at 299–303 (DDTYD).

This sequence belongs to the terpene synthase family. Tpsa subfamily. Monomer. Mg(2+) serves as cofactor. Highly expressed in leaves and at lower levels in flowers.

The catalysed reaction is (2E,6E)-farnesyl diphosphate = (-)-5-epi-eremophilene + diphosphate. The protein operates within secondary metabolite biosynthesis; terpenoid biosynthesis. Its function is as follows. Sesquiterpene synthase that catalyzes the conversion of farnesyl diphosphate to (-)-5-epi-eremophilene. The polypeptide is (-)-5-epieremophilene synthase STPS1 (Salvia miltiorrhiza (Chinese sage)).